Here is a 401-residue protein sequence, read N- to C-terminus: MDIVNDLVSSISSISSEAAEEEAIRDELRNDKGGLIAGIFVLTLTASFVPWFLTKAKITNLVSVVSILTCLSAGVIIGAGFNHILPDAAEEFQSYVEAVAPDNKYGDFPFAHTITIVTMFALICVDKILVSGGLDGEADHNHMDLSQHNHPSPHAAGEIDLNIYTNGDDDDDDVNEDQEEDSTKDDEKEHGHGHGHGHGHNSSNSSSNGHGHGLKKKKKSKKEHGHGHNHDHSSNGHSHKDEKDSEKVNVSSKSKAWVFLVALSLHSIFDGLGLGSETQKDSFYGLLIAVLAHKFLDGLVLGIAIKYAYFSFKFSCIALVFAAAMTPLGIGIGMAISSAYESSTDAYLVKGIILSITCGSFIYISLIELLPSGLCQKGWPKLKLAVAFLGYSVMAILALWV.

The next 3 membrane-spanning stretches (helical) occupy residues 33–53, 61–81, and 114–134; these read GGLI…PWFL, LVSV…GAGF, and ITIV…SGGL. The segment at 141 to 247 is disordered; sequence NHMDLSQHNH…SHKDEKDSEK (107 aa). The span at 167 to 184 shows a compositional bias: acidic residues; it reads GDDDDDDVNEDQEEDSTK. The span at 200–209 shows a compositional bias: low complexity; that stretch reads HNSSNSSSNG. Residues 212 to 225 are compositionally biased toward basic residues; that stretch reads HGLKKKKKSKKEHG. Residues 226–247 show a composition bias toward basic and acidic residues; the sequence is HGHNHDHSSNGHSHKDEKDSEK. Helical transmembrane passes span 256-276, 285-305, 316-336, 351-371, and 381-401; these read AWVF…GLGS, GLLI…GIAI, CIAL…GMAI, GIIL…ELLP, and KLKL…ALWV.

The protein belongs to the ZIP transporter (TC 2.A.5) family.

It localises to the membrane. Functionally, may transport divalent cations. May participate, with dstA, in the regulation of the differentiation of stalk cells during development. This Dictyostelium discoideum (Social amoeba) protein is Protein zntC (zntC).